The sequence spans 434 residues: Transcription factor AP-2-epsilon (434 aa).

Positions 30–123 are disordered; it reads LNQGPYSSAP…GLSLDPRRDY (94 aa). Over residues 52 to 62 the composition is skewed to pro residues; sequence PYFPPPYPQPP. Residues 53 to 58 carry the PPxY motif motif; that stretch reads YFPPPY. The segment covering 81 to 97 has biased composition (polar residues); it reads SSINSIHHQHQQPSWHT. The segment at 278–408 is H-S-H (helix-span-helix), dimerization; the sequence is RRKAANVTLL…YLLESLKGMD (131 aa). The interval 415–434 is disordered; the sequence is TGNGHSAAESKSEKDIKHRK. Over residues 422–434 the composition is skewed to basic and acidic residues; the sequence is AESKSEKDIKHRK.

It belongs to the AP-2 family. Binds DNA as a dimer. Can form homodimers or heterodimers with other AP-2 family members.

It is found in the nucleus. Functionally, sequence-specific DNA-binding protein that interacts with inducible viral and cellular enhancer elements to regulate transcription of selected genes. AP-2 factors bind to the consensus sequence 5'-GCCNNNGGC-3' and activate genes involved in a large spectrum of important biological functions. The polypeptide is Transcription factor AP-2-epsilon (Xenopus laevis (African clawed frog)).